The chain runs to 397 residues: ATP-dependent RNA helicase eIF4A (397 aa).

A Q motif motif is present at residues 24–52; that stretch reads DSFDDMNLKSELLRGIYAYGFERPSAIQQ. A Helicase ATP-binding domain is found at 55–225; sequence IMPVIKGHDV…TKFMRDPVRI (171 aa). Position 68-75 (68-75) interacts with ATP; it reads AQSGTGKT. The short motif at 173–176 is the DEAD box element; sequence DEAD. One can recognise a Helicase C-terminal domain in the interval 236 to 397; it reads GIKQFYIAVE…EMPMNVADLI (162 aa).

Belongs to the DEAD box helicase family. eIF4A subfamily. Component of the eIF4F complex, which composition varies with external and internal environmental conditions. It is composed of at least eIF4A, eIF4E and eIF4G.

The protein localises to the cytoplasm. The catalysed reaction is ATP + H2O = ADP + phosphate + H(+). ATP-dependent RNA helicase which is a subunit of the eIF4F complex involved in cap recognition and is required for mRNA binding to ribosome. In the current model of translation initiation, eIF4A unwinds RNA secondary structures in the 5'-UTR of mRNAs which is necessary to allow efficient binding of the small ribosomal subunit, and subsequent scanning for the initiator codon. The polypeptide is ATP-dependent RNA helicase eIF4A (TIF1) (Chaetomium globosum (strain ATCC 6205 / CBS 148.51 / DSM 1962 / NBRC 6347 / NRRL 1970) (Soil fungus)).